The primary structure comprises 988 residues: Transcription regulator srbA precursor (988 aa).

The Cytoplasmic portion of the chain corresponds to 1 to 427 (MSTPGIGGDF…SSWHARAISH (427 aa)). Disordered stretches follow at residues 53 to 85 (AFPE…SDAM) and 108 to 169 (GDLN…KKRA). Over residues 125-136 (SLSVHSNSPLSS) the composition is skewed to low complexity. Positions 165 to 178 (SKKRAHNVIEKRYR) are basic motif. A bHLH domain is found at 165–236 (SKKRAHNVIE…SKATEYIRHL (72 aa)). The helix-loop-helix motif stretch occupies residues 179–236 (ANLNEKIAELRDSVPSLRASYKQANGNSGDDDDDGVTSASKLNKASILSKATEYIRHL). A coiled-coil region spans residues 226-260 (LSKATEYIRHLEIRNKRLEEENTALKIRLRQLDKA). Polar residues predominate over residues 267-291 (SAASVSSPSDCTVSTESGASSSPSV). Residues 267-313 (SAASVSSPSDCTVSTESGASSSPSVFSHAEDVPSDHSPTSSHPPEGL) are disordered. Low complexity predominate over residues 301–310 (DHSPTSSHPP). The helical transmembrane segment at 428–447 (FLMLAILVVGSAFIVFVYLF) threads the bilayer. Topologically, residues 448 to 988 (NSDPRRQYSA…SDNLLLSDES (541 aa)) are lumenal. Over residues 866–881 (PPSPMSKASDMLSSSS) the composition is skewed to low complexity. The segment at 866–900 (PPSPMSKASDMLSSSSDDGEDGASQRNNNIIPHPM) is disordered.

In terms of processing, in low oxygen or sterol conditions, undergoes proteolytic cleavage by rhomboid-type protease rbdB and is released as soluble transcription factor from the membrane.

It localises to the endoplasmic reticulum membrane. The protein resides in the nucleus. In terms of biological role, precursor of the transcription factor srbA, which is embedded in the endoplasmic reticulum membrane. Low oxygen or sterol conditions promote processing of this form, releasing the transcription factor form that translocates into the nucleus and activates transcription of genes required for adaptation to anaerobic growth. Its function is as follows. Transcription factor that regulates sterol biosynthesis and hyphal morphology. Plays a critical role in ergosterol biosynthesis, resistance to the azole class of antifungal drugs, and in maintenance of cell polarity. Directly binds erg11A/cyp51A upstream DNA sequence at tandem repeats, called TR34 and TR46, that produce duplicated binding sites. Also mediates regulation of iron acquisition in response to hypoxia and low iron conditions via activation of extra- and intracellular siderophore production. Positively regulates the expression of the other hypoxia adaptation key transcription factor srbB. Required for the azole-sensing and response to azole stress. Binds the high-affinity sites 5'-A-T-C-G/A-T/G-A/G-C/T-G/C-A-T-3' of target promoters. Required for virulence in murine models of invasive pulmonary aspergillosis (IPA). This is Transcription regulator srbA precursor from Aspergillus fumigatus (strain ATCC MYA-4609 / CBS 101355 / FGSC A1100 / Af293) (Neosartorya fumigata).